We begin with the raw amino-acid sequence, 156 residues long: MKLFILAVGHKMPGWIASGFDEYTKRMPPELRIELREIKPELRSGGRSAESVMAAERQKIEAALPKGARLVALDERGRDWTTMQLAQALPGWQQDGRDVAFVIGGADGLDPELKARADTLLRISSMTLPHGMVRVLLAEQLYRAWSITQNHPYHRA.

Residues L73, G104, and 123-128 (ISSMTL) each bind S-adenosyl-L-methionine.

Belongs to the RNA methyltransferase RlmH family. Homodimer.

The protein localises to the cytoplasm. It catalyses the reaction pseudouridine(1915) in 23S rRNA + S-adenosyl-L-methionine = N(3)-methylpseudouridine(1915) in 23S rRNA + S-adenosyl-L-homocysteine + H(+). In terms of biological role, specifically methylates the pseudouridine at position 1915 (m3Psi1915) in 23S rRNA. In Burkholderia lata (strain ATCC 17760 / DSM 23089 / LMG 22485 / NCIMB 9086 / R18194 / 383), this protein is Ribosomal RNA large subunit methyltransferase H.